The primary structure comprises 358 residues: Protein-glutamate methylesterase/protein-glutamine glutaminase 2 (358 aa).

A Response regulatory domain is found at 7–124; that stretch reads SVLLVDDSAV…KNFLIESAAE (118 aa). D58 carries the 4-aspartylphosphate modification. The region spanning 170–358 is the CheB-type methylesterase domain; it reads AQTTERIVAI…QEIHQAILHR (189 aa). Residues S182, H208, and D304 contribute to the active site.

It belongs to the CheB family. In terms of processing, phosphorylated by CheA. Phosphorylation of the N-terminal regulatory domain activates the methylesterase activity.

The protein localises to the cytoplasm. It carries out the reaction [protein]-L-glutamate 5-O-methyl ester + H2O = L-glutamyl-[protein] + methanol + H(+). The catalysed reaction is L-glutaminyl-[protein] + H2O = L-glutamyl-[protein] + NH4(+). Functionally, involved in chemotaxis. Part of a chemotaxis signal transduction system that modulates chemotaxis in response to various stimuli. Catalyzes the demethylation of specific methylglutamate residues introduced into the chemoreceptors (methyl-accepting chemotaxis proteins or MCP) by CheR. Also mediates the irreversible deamidation of specific glutamine residues to glutamic acid. This chain is Protein-glutamate methylesterase/protein-glutamine glutaminase 2, found in Pseudomonas syringae pv. tomato (strain ATCC BAA-871 / DC3000).